The chain runs to 99 residues: MDLIGFGYAALVTFGSIFGYKRRGGVPSLIAGLFVGCLAGYGAYRVSNDKRDVKVSLFTAFFLATIMGVRFKRSKKIMPAGLVAGLSLMMILRLVLLLL.

3 helical membrane passes run 1-21 (MDLIGFGYAALVTFGSIFGYK), 24-44 (GGVPSLIAGLFVGCLAGYGAY), and 79-99 (PAGLVAGLSLMMILRLVLLLL).

This sequence belongs to the TMEM14 family. In terms of tissue distribution, expressed at significantly higher levels in ovarian cancer tissues than in normal tissues (at protein level).

Its subcellular location is the mitochondrion membrane. The protein resides in the endoplasmic reticulum membrane. Functionally, inhibits apoptosis via negative regulation of the mitochondrial outer membrane permeabilization involved in apoptotic signaling pathway. This chain is Transmembrane protein 14A (TMEM14A), found in Homo sapiens (Human).